The sequence spans 279 residues: DegV domain-containing protein CA_C0701 (279 aa).

The DegV domain occupies Ile-4–Glu-277. The hexadecanoate site is built by Thr-62 and Ser-94.

In terms of biological role, may bind long-chain fatty acids, such as palmitate, and may play a role in lipid transport or fatty acid metabolism. This is DegV domain-containing protein CA_C0701 from Clostridium acetobutylicum (strain ATCC 824 / DSM 792 / JCM 1419 / IAM 19013 / LMG 5710 / NBRC 13948 / NRRL B-527 / VKM B-1787 / 2291 / W).